Consider the following 308-residue polypeptide: 15-cis-phytoene synthase (308 aa).

The protein belongs to the phytoene/squalene synthase family. The cofactor is ATP. It depends on Mn(2+) as a cofactor. Requires Mg(2+) as cofactor.

The enzyme catalyses 2 (2E,6E,10E)-geranylgeranyl diphosphate = 15-cis-phytoene + 2 diphosphate. It functions in the pathway carotenoid biosynthesis; phytoene biosynthesis. Its function is as follows. Involved in the biosynthesis of carotenoids. Catalyzes the condensation of two molecules of geranylgeranyl diphosphate (GGPP) to give prephytoene diphosphate (PPPP) and the subsequent rearrangement of the cyclopropylcarbinyl intermediate to yield 15-cis-phytoene. This Synechococcus elongatus (strain ATCC 33912 / PCC 7942 / FACHB-805) (Anacystis nidulans R2) protein is 15-cis-phytoene synthase (crtB).